We begin with the raw amino-acid sequence, 313 residues long: DNA-directed RNA polymerase subunit alpha (313 aa).

The alpha N-terminal domain (alpha-NTD) stretch occupies residues methionine 1–asparagine 226. The alpha C-terminal domain (alpha-CTD) stretch occupies residues lysine 243–glutamate 313.

This sequence belongs to the RNA polymerase alpha chain family. In terms of assembly, homodimer. The RNAP catalytic core consists of 2 alpha, 1 beta, 1 beta' and 1 omega subunit. When a sigma factor is associated with the core the holoenzyme is formed, which can initiate transcription.

It carries out the reaction RNA(n) + a ribonucleoside 5'-triphosphate = RNA(n+1) + diphosphate. In terms of biological role, DNA-dependent RNA polymerase catalyzes the transcription of DNA into RNA using the four ribonucleoside triphosphates as substrates. The polypeptide is DNA-directed RNA polymerase subunit alpha (Carboxydothermus hydrogenoformans (strain ATCC BAA-161 / DSM 6008 / Z-2901)).